We begin with the raw amino-acid sequence, 158 residues long: 2-C-methyl-D-erythritol 2,4-cyclodiphosphate synthase (158 aa).

Residues D8 and H10 each contribute to the a divalent metal cation site. 4-CDP-2-C-methyl-D-erythritol 2-phosphate-binding positions include 8–10 and 34–35; these read DSH and HS. An a divalent metal cation-binding site is contributed by H42. Residues 56–58, 61–65, and R142 contribute to the 4-CDP-2-C-methyl-D-erythritol 2-phosphate site; these read DIG and FPDND.

The protein belongs to the IspF family. Homotrimer. Requires a divalent metal cation as cofactor.

The catalysed reaction is 4-CDP-2-C-methyl-D-erythritol 2-phosphate = 2-C-methyl-D-erythritol 2,4-cyclic diphosphate + CMP. The protein operates within isoprenoid biosynthesis; isopentenyl diphosphate biosynthesis via DXP pathway; isopentenyl diphosphate from 1-deoxy-D-xylulose 5-phosphate: step 4/6. Functionally, involved in the biosynthesis of isopentenyl diphosphate (IPP) and dimethylallyl diphosphate (DMAPP), two major building blocks of isoprenoid compounds. Catalyzes the conversion of 4-diphosphocytidyl-2-C-methyl-D-erythritol 2-phosphate (CDP-ME2P) to 2-C-methyl-D-erythritol 2,4-cyclodiphosphate (ME-CPP) with a corresponding release of cytidine 5-monophosphate (CMP). This is 2-C-methyl-D-erythritol 2,4-cyclodiphosphate synthase from Brachyspira hyodysenteriae (strain ATCC 49526 / WA1).